We begin with the raw amino-acid sequence, 639 residues long: Probable endo-1,3(4)-beta-glucanase ACLA_073210 (639 aa).

Positions 1-21 are cleaved as a signal peptide; the sequence is MAPSSLLLSVGSLIASSLASA. Positions 26–290 constitute a GH16 domain; sequence IREQSQSYQL…WAGNVFGESG (265 aa). The N-linked (GlcNAc...) asparagine glycan is linked to N65. E146 functions as the Nucleophile in the catalytic mechanism. E151 (proton donor) is an active-site residue. Disordered regions lie at residues 337–384 and 442–545; these read TVAS…TVAE and QSSS…GSSI. Residues 339 to 348 are compositionally biased toward polar residues; it reads ASPNTASEVH. Composition is skewed to low complexity over residues 362-376 and 478-488; these read PTVPTAAETTVVPPA and TTTEAVAETET. A617 carries GPI-anchor amidated alanine lipidation. Residues 618-639 constitute a propeptide, removed in mature form; the sequence is GARKLSVGLSGLVGALAVAALA.

This sequence belongs to the glycosyl hydrolase 16 family.

It localises to the cell membrane. It catalyses the reaction Endohydrolysis of (1-&gt;3)- or (1-&gt;4)-linkages in beta-D-glucans when the glucose residue whose reducing group is involved in the linkage to be hydrolyzed is itself substituted at C-3.. In terms of biological role, mixed-linked glucanase involved in the degradation of complex natural cellulosic substrates. The polypeptide is Probable endo-1,3(4)-beta-glucanase ACLA_073210 (Aspergillus clavatus (strain ATCC 1007 / CBS 513.65 / DSM 816 / NCTC 3887 / NRRL 1 / QM 1276 / 107)).